The following is a 385-amino-acid chain: Gibberellin 20 oxidase 5 (385 aa).

Positions 224-324 (DGSGIFRCNY…RRSLVFFSCP (101 aa)) constitute a Fe2OG dioxygenase domain. 3 residues coordinate Fe cation: His-249, Asp-251, and His-305. Arg-315 is a catalytic residue.

Belongs to the iron/ascorbate-dependent oxidoreductase family. GA20OX subfamily. The cofactor is Fe(2+). L-ascorbate is required as a cofactor. As to expression, expressed in 3-day-old seedlings and siliques. Detected in dry seeds, roots, old leaves and inflorescences.

The enzyme catalyses gibberellin A12 + 2 2-oxoglutarate + 3 O2 + H(+) = gibberellin A9 + 2 succinate + 3 CO2 + 2 H2O. It catalyses the reaction gibberellin A53 + 2 2-oxoglutarate + 3 O2 + H(+) = gibberellin A20 + 2 succinate + 3 CO2 + 2 H2O. Its pathway is plant hormone biosynthesis; gibberellin biosynthesis. Its function is as follows. Key oxidase enzyme in the biosynthesis of gibberellin that catalyzes the conversion of GA12 and GA53 to GA9 and GA20 respectively, via a three-step oxidation at C-20 of the GA skeleton. The sequence is that of Gibberellin 20 oxidase 5 (GA20OX5) from Arabidopsis thaliana (Mouse-ear cress).